The following is a 312-amino-acid chain: Olfactory receptor 10K2 (312 aa).

Residues 1–25 (MERVNETVVREVIFLGFSSLARLQQ) are Extracellular-facing. N-linked (GlcNAc...) asparagine glycosylation is present at Asn-5. Residues 26–46 (LLFVIFLLLYLFTLGTNAIII) form a helical membrane-spanning segment. Residues 47–54 (STIVLDRA) lie on the Cytoplasmic side of the membrane. Residues 55-75 (LHIPMYFFLAILSCSEICYTF) form a helical membrane-spanning segment. The Extracellular portion of the chain corresponds to 76 to 99 (IIVPKMLVDLLSQKKTISFLGCAI). Residues 100–120 (QMFSFLFLGCSHSFLLAVMGY) traverse the membrane as a helical segment. Over 121-139 (DRYIAICNPLRYSVLMGHG) the chain is Cytoplasmic. Residues 140 to 160 (VCMGLVAAACACGFTVAQIIT) traverse the membrane as a helical segment. Residues 161-197 (SLVFHLPFYSSNQLHHFFCDIAPVLKLASHHNHFSQI) are Extracellular-facing. A helical transmembrane segment spans residues 198-217 (VIFMLCTLVLAIPLLLILVS). The Cytoplasmic segment spans residues 218 to 237 (YVHILSAILQFPSTLGRCKA). The helical transmembrane segment at 238-258 (FSTCVSHLIIVTVHYGCASFI) threads the bilayer. At 259-271 (YLRPQSNYSSSQD) the chain is on the extracellular side. N-linked (GlcNAc...) asparagine glycosylation is present at Asn-265. Residues 272-292 (ALISVSYTIITPLFNPMIYSL) traverse the membrane as a helical segment. Over 293-312 (RNKEFKSALCKIVRRTISLL) the chain is Cytoplasmic.

It belongs to the G-protein coupled receptor 1 family.

Its subcellular location is the cell membrane. Odorant receptor. The sequence is that of Olfactory receptor 10K2 (OR10K2) from Homo sapiens (Human).